Reading from the N-terminus, the 299-residue chain is Dihydroorotate dehydrogenase B (NAD(+)), catalytic subunit (299 aa).

FMN-binding positions include Ser-21 and 44-45 (KS). Substrate-binding positions include Lys-44, 68–72 (NAVGL), and Asn-125. Residue Asn-125 participates in FMN binding. Residue Cys-128 is the Nucleophile of the active site. Lys-163 is a binding site for FMN. 189 to 190 (NT) is a binding site for substrate. FMN is bound by residues Gly-214, 240–241 (GG), and 262–263 (GS).

Belongs to the dihydroorotate dehydrogenase family. Type 1 subfamily. In terms of assembly, heterotetramer of 2 PyrK and 2 PyrD type B subunits. It depends on FMN as a cofactor.

It is found in the cytoplasm. It carries out the reaction (S)-dihydroorotate + NAD(+) = orotate + NADH + H(+). The protein operates within pyrimidine metabolism; UMP biosynthesis via de novo pathway; orotate from (S)-dihydroorotate (NAD(+) route): step 1/1. Functionally, catalyzes the conversion of dihydroorotate to orotate with NAD(+) as electron acceptor. This is Dihydroorotate dehydrogenase B (NAD(+)), catalytic subunit (pyrD) from Archaeoglobus fulgidus (strain ATCC 49558 / DSM 4304 / JCM 9628 / NBRC 100126 / VC-16).